Consider the following 744-residue polypeptide: NAD(P)H-quinone oxidoreductase subunit 5, chloroplastic (744 aa).

The next 16 helical transmembrane spans lie at 9–29, 40–60, 89–109, 125–145, 147–167, 185–205, 219–239, 258–278, 280–300, 327–347, 354–374, 396–416, 425–445, 552–572, 612–632, and 724–744; these read WIIP…LLFF, WVFP…DLSI, IDSL…LVLI, FTYL…SNLI, VYIF…FWFT, GDFG…SLEF, NEVN…GSVA, TPIS…FLVA, LLPL…IGII, LGYM…FHLI, ALLF…VGYS, NAFL…CFWS, WLYS…TAFY, LFSM…GISF, FSVS…KPVF, and ISSY…SIFI.

The protein belongs to the complex I subunit 5 family. As to quaternary structure, NDH is composed of at least 16 different subunits, 5 of which are encoded in the nucleus.

Its subcellular location is the plastid. It is found in the chloroplast thylakoid membrane. The catalysed reaction is a plastoquinone + NADH + (n+1) H(+)(in) = a plastoquinol + NAD(+) + n H(+)(out). The enzyme catalyses a plastoquinone + NADPH + (n+1) H(+)(in) = a plastoquinol + NADP(+) + n H(+)(out). In terms of biological role, NDH shuttles electrons from NAD(P)H:plastoquinone, via FMN and iron-sulfur (Fe-S) centers, to quinones in the photosynthetic chain and possibly in a chloroplast respiratory chain. The immediate electron acceptor for the enzyme in this species is believed to be plastoquinone. Couples the redox reaction to proton translocation, and thus conserves the redox energy in a proton gradient. The protein is NAD(P)H-quinone oxidoreductase subunit 5, chloroplastic (ndhF) of Cicer arietinum (Chickpea).